The following is a 486-amino-acid chain: Betaine aldehyde dehydrogenase (486 aa).

Residues T23 and D90 each contribute to the K(+) site. 147-149 is an NAD(+) binding site; the sequence is GAW. The Charge relay system role is filled by K159. NAD(+) contacts are provided by residues 173 to 176 and 226 to 229; these read KPSE and ESGT. A K(+)-binding site is contributed by L241. E247 (proton acceptor) is an active-site residue. 3 residues coordinate NAD(+): G249, C281, and E382. C281 functions as the Nucleophile in the catalytic mechanism. Residue C281 is modified to Cysteine sulfenic acid (-SOH). K(+)-binding residues include K452 and G455. Catalysis depends on E459, which acts as the Charge relay system.

It belongs to the aldehyde dehydrogenase family. In terms of assembly, dimer of dimers. Requires K(+) as cofactor.

It carries out the reaction betaine aldehyde + NAD(+) + H2O = glycine betaine + NADH + 2 H(+). Its pathway is amine and polyamine biosynthesis; betaine biosynthesis via choline pathway; betaine from betaine aldehyde: step 1/1. Functionally, involved in the biosynthesis of the osmoprotectant glycine betaine. Catalyzes the irreversible oxidation of betaine aldehyde to the corresponding acid. The sequence is that of Betaine aldehyde dehydrogenase from Vibrio parahaemolyticus serotype O3:K6 (strain RIMD 2210633).